The primary structure comprises 735 residues: Coiled-coil quantitatively-enriched protein 1 (735 aa).

A coiled-coil region spans residues 514 to 719; it reads AAVQYLQRRL…TLKILEQKSL (206 aa).

Interacts (during meiosis) with pcp1. Interacts with clr3, pot1, taz1 and tpz1.

It is found in the nucleus. It localises to the nucleoplasm. Its subcellular location is the chromosome. The protein localises to the telomere. In terms of biological role, component of the meiotic bouquet that facilitates meiotic nuclear reorganization of the telomeres to the centrosome. Links telomeres to the meiotic centrosome component pcp1. Essential for the formation of normal telomere clusters during meiotic prophase. Required for telomere length regulation and chromosome segregation. Required for proper positioning of nucleosomes at heterochromatic loci and for transcriptional gene silencing (TGS) function of the Snf2/Hdac-containing repressor complex (SHREC). The sequence is that of Coiled-coil quantitatively-enriched protein 1 (ccq1) from Schizosaccharomyces pombe (strain 972 / ATCC 24843) (Fission yeast).